Here is a 668-residue protein sequence, read N- to C-terminus: MMPSPSDSSRSLTSRPSTRGLTHLRLHRPWLQALLTLGLVQVLLGILVVTFSMVASSVTTTESIKRSCPSWAGFSLAFSGVVGIVSWKRPFTLVISFFSLLSVLCVMLSMAGSVLSCKNAQLARDFQQCSLEGKVCVCCPSVPLLRPCPESGQELKVAPNSTCDEARGALKNLLFSVCGLTICAAIICTLSAIVCCIQIFSLDLVHTLAPERSVSGPLGPLGCTSPPPAPLLHTMLDLEEFVPPVPPPPYYPPEYTCSSETDAQSITYNGSMDSPVPLYPTDCPPSYEAVMGLRGDSQATLFDPQLHDGSCICERVASIVDVSMDSGSLVLSAIGDLPGGSSPSEDSCLLELQGSVRSVDYVLFRSIQRSRAGYCLSLDCGLRGPFEESPLPRRPPRAARSYSCSAPEAPPPLGAPTAARSCHRLEGWPPWVGPCFPELRRRVPRGGGRPAAAPPTRAPTRRFSDSSGSLTPPGHRPPHPASPPPLLLPRSHSDPGITTSSDTADFRDLYTKVLEEEAASVSSADTGLCSEACLFRLARCPSPKLLRARSAEKRRPVPTFQKVPLPSGPAPAHSLGDLKGSWPGRGLVTRFLQISRKAPDPSGTGAHGHKQVPRSLWGRPGRESLHLRSCGDLSSSSSLRRLLSGRRLERGTRPHSLSLNGGSRETGL.

3 helical membrane-spanning segments follow: residues 34–54, 67–87, and 91–111; these read LLTL…FSMV, SCPS…IVSW, and FTLV…LSMA. Residue Asn160 is glycosylated (N-linked (GlcNAc...) asparagine). A helical membrane pass occupies residues 174 to 194; it reads LFSVCGLTICAAIICTLSAIV. Phosphoserine is present on residues Ser358 and Ser389. Disordered stretches follow at residues 386 to 419, 442 to 503, and 550 to 570; these read FEES…PTAA, RVPR…SSDT, and SAEK…SGPA. Positions 398–407 are enriched in low complexity; that stretch reads AARSYSCSAP. Ser493 bears the Phosphoserine mark. Residue Ser574 is modified to Phosphoserine. Disordered stretches follow at residues 597 to 620 and 645 to 668; these read KAPD…WGRP and GRRL…ETGL. Polar residues predominate over residues 655–668; the sequence is HSLSLNGGSRETGL.

The protein belongs to the ENTREP family. In terms of assembly, may interact with WWOX. In terms of tissue distribution, widely expressed.

Its subcellular location is the membrane. The chain is Protein ENTREP3 from Homo sapiens (Human).